Reading from the N-terminus, the 2376-residue chain is Protein Ycf2 (2376 aa).

3 disordered regions span residues 173 to 194 (SSQL…GTED), 226 to 256 (TEIE…EMNN), and 952 to 1011 (KRKK…KRKE). Low complexity predominate over residues 235-245 (KGLSGSSSKSR). 2 stretches are compositionally biased toward basic and acidic residues: residues 246–255 (LFTEGEKEMN) and 960–1009 (KRKE…PEKR). ATP is bound at residue 1441–1448 (GSIGSGRS). Disordered stretches follow at residues 1515 to 1534 (YEDR…DYEP), 1860 to 2046 (LVGS…LRPK), and 2112 to 2230 (PAEE…DGFS). Acidic residues predominate over residues 1866–2025 (TEEEVEGTEE…GEGTEDEEGE (160 aa)). Positions 2026–2038 (GTEKDSSQFDNDR) are enriched in basic and acidic residues. Acidic residues-rich tracts occupy residues 2112-2129 (PAEE…EALE) and 2136-2213 (GEEE…ENDS).

It belongs to the Ycf2 family.

Its subcellular location is the plastid. The protein resides in the chloroplast stroma. Probable ATPase of unknown function. Its presence in a non-photosynthetic plant (Epifagus virginiana) and experiments in tobacco indicate that it has an essential function which is probably not related to photosynthesis. This is Protein Ycf2 from Oenothera glazioviana (Large-flowered evening primrose).